A 286-amino-acid chain; its full sequence is MKIDGYTRMAAVVANPIKHSLSPFIHNLAFDLTDENGVYLAWEVESKKLAAIVENVRNLDMYGLNISMPYKGEIIKFMDELSPAAELIGAVNTVVNHSGKIIGHNTDGIGFFNSLKKYDFKIENKQMLVLGGGGAAIALIAQAALSGAKKIVVAARKSASYDPLNEKLAKLSAKTGVEIFLTDLSGADRLQKELNQTDLLVNATSVGMDGASFPLEKSLLLPDRLLVVDAIYKVRETPFLRWAKEQGAQTENGLGMLIGQAAESFYLWTGKEMPVDKITLEMEREV.

Residues 20–22 (SLS) and serine 67 each bind shikimate. Residue lysine 71 is the Proton acceptor of the active site. Shikimate-binding residues include asparagine 92 and aspartate 107. Residues 131-135 (GGGGA) and alanine 230 contribute to the NADP(+) site. Shikimate is bound at residue tyrosine 232. An NADP(+)-binding site is contributed by glycine 253.

The protein belongs to the shikimate dehydrogenase family. Homodimer.

It catalyses the reaction shikimate + NADP(+) = 3-dehydroshikimate + NADPH + H(+). It participates in metabolic intermediate biosynthesis; chorismate biosynthesis; chorismate from D-erythrose 4-phosphate and phosphoenolpyruvate: step 4/7. Functionally, involved in the biosynthesis of the chorismate, which leads to the biosynthesis of aromatic amino acids. Catalyzes the reversible NADPH linked reduction of 3-dehydroshikimate (DHSA) to yield shikimate (SA). The polypeptide is Shikimate dehydrogenase (NADP(+)) (Lactococcus lactis subsp. cremoris (strain SK11)).